We begin with the raw amino-acid sequence, 213 residues long: Bacteriochlorophyll synthase 23 kDa chain (213 aa).

It functions in the pathway porphyrin-containing compound metabolism; bacteriochlorophyll biosynthesis (light-independent). This Rhodobacter capsulatus (strain ATCC BAA-309 / NBRC 16581 / SB1003) protein is Bacteriochlorophyll synthase 23 kDa chain (bchJ).